A 461-amino-acid chain; its full sequence is Bifunctional protein HldE (461 aa).

The ribokinase stretch occupies residues 1 to 315 (MKKILVIGDL…LILNQTHPKI (315 aa)). Residue 191–194 (NRTE) coordinates ATP. The active site involves Asp260. The tract at residues 332-461 (FTNGCFDLLH…IEKIKRTCND (130 aa)) is cytidylyltransferase.

It in the N-terminal section; belongs to the carbohydrate kinase PfkB family. This sequence in the C-terminal section; belongs to the cytidylyltransferase family. Homodimer.

It catalyses the reaction D-glycero-beta-D-manno-heptose 7-phosphate + ATP = D-glycero-beta-D-manno-heptose 1,7-bisphosphate + ADP + H(+). It carries out the reaction D-glycero-beta-D-manno-heptose 1-phosphate + ATP + H(+) = ADP-D-glycero-beta-D-manno-heptose + diphosphate. Its pathway is nucleotide-sugar biosynthesis; ADP-L-glycero-beta-D-manno-heptose biosynthesis; ADP-L-glycero-beta-D-manno-heptose from D-glycero-beta-D-manno-heptose 7-phosphate: step 1/4. It functions in the pathway nucleotide-sugar biosynthesis; ADP-L-glycero-beta-D-manno-heptose biosynthesis; ADP-L-glycero-beta-D-manno-heptose from D-glycero-beta-D-manno-heptose 7-phosphate: step 3/4. It participates in bacterial outer membrane biogenesis; LPS core biosynthesis. Functionally, catalyzes the phosphorylation of D-glycero-D-manno-heptose 7-phosphate at the C-1 position to selectively form D-glycero-beta-D-manno-heptose-1,7-bisphosphate. Catalyzes the ADP transfer from ATP to D-glycero-beta-D-manno-heptose 1-phosphate, yielding ADP-D-glycero-beta-D-manno-heptose. The sequence is that of Bifunctional protein HldE from Helicobacter pylori (strain ATCC 700392 / 26695) (Campylobacter pylori).